A 158-amino-acid polypeptide reads, in one-letter code: uncharacterized protein (158 aa).

Residues 1–22 form the signal peptide; sequence MKKIPNKLLAVSAFLTITTTYA. The chain crosses the membrane as a helical span at residues 120-140; sequence LTGIIEYDTKFENHYETLVEA.

It localises to the cell membrane. This is an uncharacterized protein from Bacillus cereus.